Here is a 393-residue protein sequence, read N- to C-terminus: S-adenosylmethionine synthase (393 aa).

H16 contributes to the ATP binding site. D18 provides a ligand contact to Mg(2+). E44 contacts K(+). Residues E57 and Q100 each coordinate L-methionine. A flexible loop region spans residues 100–110; the sequence is QSNDIAQGVDH. ATP-binding positions include 167–169, 238–239, D247, 253–254, A270, and K274; these read DAK, RF, and RK. D247 provides a ligand contact to L-methionine. K278 contacts L-methionine.

This sequence belongs to the AdoMet synthase family. Homotetramer; dimer of dimers. It depends on Mg(2+) as a cofactor. Requires K(+) as cofactor.

It localises to the cytoplasm. It carries out the reaction L-methionine + ATP + H2O = S-adenosyl-L-methionine + phosphate + diphosphate. It participates in amino-acid biosynthesis; S-adenosyl-L-methionine biosynthesis; S-adenosyl-L-methionine from L-methionine: step 1/1. Functionally, catalyzes the formation of S-adenosylmethionine (AdoMet) from methionine and ATP. The overall synthetic reaction is composed of two sequential steps, AdoMet formation and the subsequent tripolyphosphate hydrolysis which occurs prior to release of AdoMet from the enzyme. In Paracidovorax citrulli (strain AAC00-1) (Acidovorax citrulli), this protein is S-adenosylmethionine synthase.